A 153-amino-acid chain; its full sequence is Ribonuclease K6 (153 aa).

The N-terminal stretch at 1 to 27 (MVVDLPRYLPLLLLLELWEPMYLLCSQ) is a signal peptide. H41 acts as the Proton acceptor in catalysis. Cystine bridges form between C49–C107, C63–C117, C81–C132, and C88–C95. The N-linked (GlcNAc...) asparagine glycan is linked to N58. 64–68 (KQINT) serves as a coordination point for substrate. An N-linked (GlcNAc...) asparagine glycan is attached at N85. K89 serves as a coordination point for substrate. The active-site Proton donor is the H148.

Belongs to the pancreatic ribonuclease family. In terms of assembly, interacts (via N-terminus) with bacterial lipopolysaccharide (LPS). As to expression, highly expressed in spleen (at protein level). Has little or no expression in healthy kidneys (at protein level). Detected at high levels in infected kidneys (at protein level). Expressed at low levels in bladder. Also detected in skeletal muscle, heart and bone marrow.

It is found in the secreted. The protein resides in the lysosome. The protein localises to the cytoplasmic granule. Functionally, ribonuclease which shows a preference for the pyrimidines uridine and cytosine. Has potent antibacterial activity against a range of Gram-positive and Gram-negative bacteria, including P.aeruginosa, A.baumanii, M.luteus, S.aureus, E.faecalis, E.faecium, S.saprophyticus and E.coli. Causes loss of bacterial membrane integrity, and also promotes agglutination of Gram-negative bacteria. Probably contributes to urinary tract sterility. Bactericidal activity is independent of RNase activity. The polypeptide is Ribonuclease K6 (Rnase6) (Mus musculus (Mouse)).